The primary structure comprises 305 residues: Methionyl-tRNA formyltransferase (305 aa).

(6S)-5,6,7,8-tetrahydrofolate is bound at residue 111–114 (SLLP).

Belongs to the Fmt family.

The enzyme catalyses L-methionyl-tRNA(fMet) + (6R)-10-formyltetrahydrofolate = N-formyl-L-methionyl-tRNA(fMet) + (6S)-5,6,7,8-tetrahydrofolate + H(+). Attaches a formyl group to the free amino group of methionyl-tRNA(fMet). The formyl group appears to play a dual role in the initiator identity of N-formylmethionyl-tRNA by promoting its recognition by IF2 and preventing the misappropriation of this tRNA by the elongation apparatus. The polypeptide is Methionyl-tRNA formyltransferase (Campylobacter jejuni (strain RM1221)).